The sequence spans 322 residues: Undecaprenyl-phosphate 4-deoxy-4-formamido-L-arabinose transferase (322 aa).

The Cytoplasmic segment spans residues 1–235 (MFEIHPVKKV…TCLTTTPLRM (235 aa)). Residues 236 to 256 (LSLLGSIIAIGGFSIAVLLVI) form a helical membrane-spanning segment. Topologically, residues 257–269 (LRLTFGPQWAAEG) are periplasmic. Residues 270–290 (VFMLFAVLFTFIGAQFIGMGL) traverse the membrane as a helical segment. Over 291 to 322 (LGEYIGRIYTDVRARPRYFVQQVIRPSSKENE) the chain is Cytoplasmic.

It belongs to the glycosyltransferase 2 family.

Its subcellular location is the cell inner membrane. The enzyme catalyses UDP-4-deoxy-4-formamido-beta-L-arabinose + di-trans,octa-cis-undecaprenyl phosphate = 4-deoxy-4-formamido-alpha-L-arabinopyranosyl di-trans,octa-cis-undecaprenyl phosphate + UDP. It participates in glycolipid biosynthesis; 4-amino-4-deoxy-alpha-L-arabinose undecaprenyl phosphate biosynthesis; 4-amino-4-deoxy-alpha-L-arabinose undecaprenyl phosphate from UDP-4-deoxy-4-formamido-beta-L-arabinose and undecaprenyl phosphate: step 1/2. The protein operates within bacterial outer membrane biogenesis; lipopolysaccharide biosynthesis. Its function is as follows. Catalyzes the transfer of 4-deoxy-4-formamido-L-arabinose from UDP to undecaprenyl phosphate. The modified arabinose is attached to lipid A and is required for resistance to polymyxin and cationic antimicrobial peptides. This Escherichia coli O17:K52:H18 (strain UMN026 / ExPEC) protein is Undecaprenyl-phosphate 4-deoxy-4-formamido-L-arabinose transferase.